A 319-amino-acid chain; its full sequence is N-acetylneuraminate lyase (319 aa).

Aceneuramate contacts are provided by T51 and T52. The active-site Proton donor is the Y143. K173 serves as the catalytic Schiff-base intermediate with substrate. Aceneuramate-binding residues include S175, G199, D201, E202, and S218.

The protein belongs to the DapA family. NanA subfamily. As to quaternary structure, homotetramer.

Its subcellular location is the cytoplasm. It carries out the reaction aceneuramate = aldehydo-N-acetyl-D-mannosamine + pyruvate. It participates in amino-sugar metabolism; N-acetylneuraminate degradation. Its function is as follows. Catalyzes the cleavage of N-acetylneuraminic acid (sialic acid) to form pyruvate and N-acetylmannosamine via a Schiff base intermediate. It prevents sialic acids from being recycled and returning to the cell surface. Involved in the N-glycolylneuraminic acid (Neu5Gc) degradation pathway. The sequence is that of N-acetylneuraminate lyase from Sus scrofa (Pig).